The sequence spans 211 residues: Ribonuclease HII (211 aa).

The region spanning 24–211 (QLIAGVDEVG…KPVKKALGLD (188 aa)) is the RNase H type-2 domain. A divalent metal cation-binding residues include Asp-30, Glu-31, and Asp-122.

This sequence belongs to the RNase HII family. Mn(2+) serves as cofactor. Requires Mg(2+) as cofactor.

It is found in the cytoplasm. The enzyme catalyses Endonucleolytic cleavage to 5'-phosphomonoester.. Its function is as follows. Endonuclease that specifically degrades the RNA of RNA-DNA hybrids. The polypeptide is Ribonuclease HII (Vibrio parahaemolyticus serotype O3:K6 (strain RIMD 2210633)).